The sequence spans 346 residues: tRNA N6-adenosine threonylcarbamoyltransferase (346 aa).

Fe cation-binding residues include His111 and His115. Residues 134-138 (LVSGG), Asp167, Gly180, and Asn277 contribute to the substrate site. Asp305 is a binding site for Fe cation.

This sequence belongs to the KAE1 / TsaD family. Fe(2+) is required as a cofactor.

It is found in the cytoplasm. The enzyme catalyses L-threonylcarbamoyladenylate + adenosine(37) in tRNA = N(6)-L-threonylcarbamoyladenosine(37) in tRNA + AMP + H(+). Required for the formation of a threonylcarbamoyl group on adenosine at position 37 (t(6)A37) in tRNAs that read codons beginning with adenine. Is involved in the transfer of the threonylcarbamoyl moiety of threonylcarbamoyl-AMP (TC-AMP) to the N6 group of A37, together with TsaE and TsaB. TsaD likely plays a direct catalytic role in this reaction. The sequence is that of tRNA N6-adenosine threonylcarbamoyltransferase from Bordetella bronchiseptica (strain ATCC BAA-588 / NCTC 13252 / RB50) (Alcaligenes bronchisepticus).